Consider the following 687-residue polypeptide: Polyphosphate kinase (687 aa).

Asn45 serves as a coordination point for ATP. Residues Arg373 and Arg403 each coordinate Mg(2+). Residue His433 is the Phosphohistidine intermediate of the active site. The ATP site is built by Tyr466, Arg562, and His590. A PLD phosphodiesterase domain is found at Asp585 to Asn615.

Belongs to the polyphosphate kinase 1 (PPK1) family. It depends on Mg(2+) as a cofactor. Post-translationally, an intermediate of this reaction is the autophosphorylated ppk in which a phosphate is covalently linked to a histidine residue through a N-P bond.

The enzyme catalyses [phosphate](n) + ATP = [phosphate](n+1) + ADP. Functionally, catalyzes the reversible transfer of the terminal phosphate of ATP to form a long-chain polyphosphate (polyP). The polypeptide is Polyphosphate kinase (Yersinia pestis).